We begin with the raw amino-acid sequence, 583 residues long: MRTHFCGLVDETLIGQTVTLAGWTDVARNQGGVCFIDLRDHEGIVQVTVEVDNAEVFAVAASLGYEDVLQVEGVVRARHAVNDKMRTGKVEVIATAITVLNKAAPLPFHAHENPGEETRLKYRYLDLRRPEMQRMQRTRIKLVQALRRHLDEKGFQDIETPILTKATPEGARDFLVPARMHPGEFYALPQSPQLFKQILMVAGFDRYYQIARCFRDEALRADRQLEFTQLDMEFAFVRERDVQDFVEDMIRAIFKEVVDVQLDASFPRMTWAEAMRRYGSDKPDLRIALELVDVAELVKDSEFPVFTGPANDAEGRVAALRIPGGASLSRKQIDEYAAHAAKYGAKGLAYIKIADNGEISSPIQKFFSEASFAALVAHVGAGNGDIVFFGAGGYNKVSDFMGALRLKAGKDFGLVADGWAPLWVTDFPMFEWDEEEQRYVALHHPFTAPAVDDIADLRANARTAVSRGYDMVLNGNEIGGGSIRIHRPDMQSAVFELLGIGAEEARAKFGFLLDALNYGAPPHGGIAFGIDRIAALMAGTESIRDVIPFPKTTGAQDLMTDAPSPIVDAQLAEVHIQVRPKTN.

E169 is a binding site for L-aspartate. Positions 193–196 are aspartate; it reads QLFK. Residue R215 participates in L-aspartate binding. Residues 215 to 217 and Q224 contribute to the ATP site; that span reads RDE. H443 is a binding site for L-aspartate. E477 contacts ATP. Position 484 (R484) interacts with L-aspartate. ATP is bound at residue 529–532; sequence GIDR.

Belongs to the class-II aminoacyl-tRNA synthetase family. Type 1 subfamily. Homodimer.

It is found in the cytoplasm. It carries out the reaction tRNA(Asp) + L-aspartate + ATP = L-aspartyl-tRNA(Asp) + AMP + diphosphate. Functionally, catalyzes the attachment of L-aspartate to tRNA(Asp) in a two-step reaction: L-aspartate is first activated by ATP to form Asp-AMP and then transferred to the acceptor end of tRNA(Asp). The sequence is that of Aspartate--tRNA ligase from Stenotrophomonas maltophilia (strain K279a).